The following is a 174-amino-acid chain: Neuromedin-U (174 aa).

The signal sequence occupies residues methionine 1–alanine 37. The propeptide occupies cysteine 38–arginine 105. Methionine 141 carries the methionine sulfoxide; partial modification. Asparagine amide is present on asparagine 166. A propeptide spanning residues serine 170–isoleucine 174 is cleaved from the precursor.

Belongs to the NmU family.

The protein resides in the secreted. In terms of biological role, ligand for receptors NMUR1 and NMUR2. Stimulates muscle contractions of specific regions of the gastrointestinal tract. Its function is as follows. Does not function as a ligand for either NMUR1 or NMUR2. Indirectly induces prolactin release although its potency is much lower than that of neuromedin precursor-related peptide 36. Functionally, does not function as a ligand for either NMUR1 or NMUR2. Indirectly induces prolactin release from lactotroph cells in the pituitary gland, probably via the hypothalamic dopaminergic system. Stimulates muscle contractions of specific regions of the gastrointestinal tract. This chain is Neuromedin-U (Nmu), found in Mus musculus (Mouse).